We begin with the raw amino-acid sequence, 253 residues long: Dihydroanticapsin 7-dehydrogenase (253 aa).

Position 9–31 (9–31) interacts with NAD(+); the sequence is LITGGASGIGYAAVQAFLGQQAN. Ser-139 provides a ligand contact to substrate. The active-site Proton acceptor is the Tyr-152.

It belongs to the short-chain dehydrogenases/reductases (SDR) family.

It catalyses the reaction L-dihydroanticapsin + NAD(+) = L-anticapsin + NADH + H(+). It functions in the pathway antibiotic biosynthesis; bacilysin biosynthesis. Functionally, part of the bacABCDEFG operon responsible for the biosynthesis of bacilysin, an irreversible inactivator of the glutaminase domain of glucosamine synthetase. Catalyzes the dehydrogenation of the C7-hydroxyl group in the 4S-tetrahydrotyrosine (4S-H4Tyr) to yield anticapsin (epoxycyclohexanonyl-Ala). It is not able to oxidize the 4R-H4Tyr diastereomer and the dihydrobacilysin dipeptide (L-Ala-4S-H4Tyr dipeptide). This is Dihydroanticapsin 7-dehydrogenase from Bacillus subtilis (strain 168).